The primary structure comprises 601 residues: Protein CT_858 (601 aa).

The protein belongs to the chlamydial CPn_1016/CT_858/TC_0248 family.

This Chlamydia trachomatis serovar D (strain ATCC VR-885 / DSM 19411 / UW-3/Cx) protein is Protein CT_858.